The primary structure comprises 308 residues: Nodulation protein D 1 (308 aa).

In terms of domain architecture, HTH lysR-type spans 6–63; sequence LDLNLLVALDALMTERNLTAAARSINLSQPAMSAAVGRLRVYFEDELFTMNGRELVLT. Positions 23–42 form a DNA-binding region, H-T-H motif; it reads LTAAARSINLSQPAMSAAVG.

Belongs to the LysR transcriptional regulatory family.

Its function is as follows. NodD regulates the expression of the nodABCFE genes which encode other nodulation proteins. NodD is also a negative regulator of its own expression. Binds flavonoids as inducers. The sequence is that of Nodulation protein D 1 (nodD1) from Rhizobium tropici.